The chain runs to 54 residues: Beta-2-microglobulin (54 aa).

The Ig-like C1-type domain occupies Lys-3–Thr-41.

This sequence belongs to the beta-2-microglobulin family. In terms of assembly, heterodimer of an alpha chain and a beta chain. Beta-2-microglobulin is the beta-chain of major histocompatibility complex class I molecules.

The protein resides in the secreted. Functionally, component of the class I major histocompatibility complex (MHC). Involved in the presentation of peptide antigens to the immune system. This is Beta-2-microglobulin (B2M) from Mesocricetus auratus (Golden hamster).